The following is a 601-amino-acid chain: Putative helicase 7 (601 aa).

One can recognise a Helicase ATP-binding domain in the interval 17-182 (QSFLMSDKNL…IIDAEIIKTD (166 aa)). 30–37 (APTGTGKS) serves as a coordination point for ATP. A DEAH box motif is present at residues 129–132 (DEIH). Positions 208 to 375 (LKEDFIKKMV…VLEDFLLALI (168 aa)) constitute a Helicase C-terminal domain.

The protein is Putative helicase 7 (SIFV0007) of Saccharolobus islandicus (Sulfolobus islandicus).